Consider the following 163-residue polypeptide: Large ribosomal subunit protein uL15 (163 aa).

It belongs to the universal ribosomal protein uL15 family. Part of the 50S ribosomal subunit.

Its function is as follows. Binds to the 23S rRNA. The sequence is that of Large ribosomal subunit protein uL15 from Orientia tsutsugamushi (strain Boryong) (Rickettsia tsutsugamushi).